Here is a 160-residue protein sequence, read N- to C-terminus: Putative NrdI-like protein (160 aa).

It belongs to the NrdI family.

This is Putative NrdI-like protein from Streptococcus pyogenes serotype M3 (strain ATCC BAA-595 / MGAS315).